The following is a 279-amino-acid chain: Prohibitin-4, mitochondrial (279 aa).

At Gly2 the chain carries N-acetylglycine. The Mitochondrial matrix portion of the chain corresponds to 2 to 6 (GSQQV). Residues 7-28 (AISFLTNLAKAAFGLGVAATAL) form a helical; Signal-anchor for type II membrane protein membrane-spanning segment. At 29 to 279 (NSSLYTVDGG…SMLFNLNPGR (251 aa)) the chain is on the mitochondrial intermembrane side.

The protein belongs to the prohibitin family. Component of a prohibitin multimeric complex in mitochondrial membranes. As to expression, mostly expressed in proliferative tissues, including vasculature, shoot and root apical tissues. Accumulates in dry seeds.

The protein localises to the mitochondrion inner membrane. Prohibitin probably acts as a holdase/unfoldase for the stabilization of newly synthesized mitochondrial proteins. This Arabidopsis thaliana (Mouse-ear cress) protein is Prohibitin-4, mitochondrial (PHB4).